The primary structure comprises 307 residues: GTPase Era (307 aa).

The Era-type G domain maps to 17–186 (RCGFVAIVGR…LELIKPYLPE (170 aa)). The tract at residues 25-32 (GRPNVGKS) is G1. 25 to 32 (GRPNVGKS) lines the GTP pocket. The G2 stretch occupies residues 51–55 (QTTRN). Residues 72–75 (DTPG) form a G3 region. Residues 72-76 (DTPGF) and 133-136 (NKID) contribute to the GTP site. Positions 133-136 (NKID) are G4. The G5 stretch occupies residues 165–167 (VSA). Residues 217–293 (LGEELPYAMN…FLKVWVKVKS (77 aa)) form the KH type-2 domain.

It belongs to the TRAFAC class TrmE-Era-EngA-EngB-Septin-like GTPase superfamily. Era GTPase family. Monomer.

Its subcellular location is the cytoplasm. The protein localises to the cell inner membrane. An essential GTPase that binds both GDP and GTP, with rapid nucleotide exchange. Plays a role in 16S rRNA processing and 30S ribosomal subunit biogenesis and possibly also in cell cycle regulation and energy metabolism. This chain is GTPase Era, found in Neisseria meningitidis serogroup B (strain ATCC BAA-335 / MC58).